The chain runs to 336 residues: Alcohol dehydrogenase (336 aa).

7 residues coordinate Zn(2+): C37, H58, C89, C92, C95, C103, and C145.

Belongs to the zinc-containing alcohol dehydrogenase family. Zn(2+) serves as cofactor.

The catalysed reaction is a primary alcohol + NAD(+) = an aldehyde + NADH + H(+). It catalyses the reaction a secondary alcohol + NAD(+) = a ketone + NADH + H(+). The protein is Alcohol dehydrogenase (adh) of Staphylococcus aureus (strain USA300).